We begin with the raw amino-acid sequence, 495 residues long: Putative aldehyde dehydrogenase AldA (495 aa).

212-218 (GKGSESG) is an NAD(+) binding site. Active-site residues include Glu-256 and Cys-290.

This sequence belongs to the aldehyde dehydrogenase family.

It catalyses the reaction an aldehyde + NAD(+) + H2O = a carboxylate + NADH + 2 H(+). This Staphylococcus aureus (strain Mu50 / ATCC 700699) protein is Putative aldehyde dehydrogenase AldA (aldA).